The chain runs to 253 residues: MAVQISKKRKFVADGIFKAELNEFLTRELAEDGYSGVEVRVTPTRTEIIILATRTQNVLGEKGRRIRELTAVVQKRFGFPEGSVELYAEKVATRGLCAIAQAESLRYKLLGGLAVRRACYGVLRFIMESGSKGCEVVVSGKLRGQRAKSMKFVDGLMIHSGDPVNYYVDTAVRHVLLRQGVLGIKVKIMLAWDPSGKIGPKKPLPDHVSIVEPKDEILPTTPISEQKGGKPDPQVPQQPPQQPPAMPPPVPTA.

Residues 21–92 (LNEFLTRELA…SVELYAEKVA (72 aa)) enclose the KH type-2 domain. Residues 211-253 (VEPKDEILPTTPISEQKGGKPDPQVPQQPPQQPPAMPPPVPTA) are disordered. Residues 233–253 (PQVPQQPPQQPPAMPPPVPTA) are compositionally biased toward pro residues.

Belongs to the universal ribosomal protein uS3 family.

The protein resides in the cytoplasm. It localises to the nucleus. The protein localises to the nucleolus. It is found in the mitochondrion inner membrane. Its subcellular location is the cytoskeleton. The protein resides in the spindle. It carries out the reaction 2'-deoxyribonucleotide-(2'-deoxyribose 5'-phosphate)-2'-deoxyribonucleotide-DNA = a 3'-end 2'-deoxyribonucleotide-(2,3-dehydro-2,3-deoxyribose 5'-phosphate)-DNA + a 5'-end 5'-phospho-2'-deoxyribonucleoside-DNA + H(+). Component of the small ribosomal subunit. The ribosome is a large ribonucleoprotein complex responsible for the synthesis of proteins in the cell. Has endonuclease activity and plays a role in repair of damaged DNA. Also involved in other processes including regulation of transcription, translation of its cognate mRNA, spindle formation and chromosome movement during mitosis, and apoptosis. The chain is Small ribosomal subunit protein uS3 (RPS3) from Ambystoma mexicanum (Axolotl).